The sequence spans 322 residues: 4-hydroxythreonine-4-phosphate dehydrogenase (322 aa).

T132 is a substrate binding site. Residues H160, H205, and H260 each contribute to the a divalent metal cation site. Substrate contacts are provided by K268, N277, and R286.

The protein belongs to the PdxA family. In terms of assembly, homodimer. It depends on Zn(2+) as a cofactor. Requires Mg(2+) as cofactor. The cofactor is Co(2+).

Its subcellular location is the cytoplasm. It carries out the reaction 4-(phosphooxy)-L-threonine + NAD(+) = 3-amino-2-oxopropyl phosphate + CO2 + NADH. The protein operates within cofactor biosynthesis; pyridoxine 5'-phosphate biosynthesis; pyridoxine 5'-phosphate from D-erythrose 4-phosphate: step 4/5. Its function is as follows. Catalyzes the NAD(P)-dependent oxidation of 4-(phosphooxy)-L-threonine (HTP) into 2-amino-3-oxo-4-(phosphooxy)butyric acid which spontaneously decarboxylates to form 3-amino-2-oxopropyl phosphate (AHAP). This is 4-hydroxythreonine-4-phosphate dehydrogenase from Xanthomonas campestris pv. campestris (strain 8004).